Reading from the N-terminus, the 277-residue chain is MSRQETTPYTLGEIEQGTPCCVPKALLRVRDLAVSYGEITVLSQVSLDIYKGCITALIGPSGCGKTSFLSTLNRLTDHHERARVNGRILFDGQDLLCDPVDTLRLRRRIGMIFQRPNPFPLSIWRNLELPLKEHGVRDRQTRYRKIEQALKDVGLWDEVSDRLGISALVLSGGQQQRLCIARALVLEPEILLMDEPCSALDPISSGVVEELILRLRGRYTVVIVTHNLAQARRVANYAGFFWMTERVGKLIEFGQCQHLFETPSHELTAAYISGARG.

The ABC transporter domain maps to 27-272; that stretch reads LRVRDLAVSY…PSHELTAAYI (246 aa). 59–66 is a binding site for ATP; that stretch reads GPSGCGKT.

This sequence belongs to the ABC transporter superfamily. Phosphate importer (TC 3.A.1.7) family. The complex is composed of two ATP-binding proteins (PstB), two transmembrane proteins (PstC and PstA) and a solute-binding protein (PstS).

Its subcellular location is the cell inner membrane. It carries out the reaction phosphate(out) + ATP + H2O = ADP + 2 phosphate(in) + H(+). Functionally, part of the ABC transporter complex PstSACB involved in phosphate import. Responsible for energy coupling to the transport system. The protein is Phosphate import ATP-binding protein PstB 1 of Nitrosococcus oceani (strain ATCC 19707 / BCRC 17464 / JCM 30415 / NCIMB 11848 / C-107).